Reading from the N-terminus, the 420-residue chain is UDP-N-acetylglucosamine 1-carboxyvinyltransferase (420 aa).

22 to 23 contributes to the phosphoenolpyruvate binding site; sequence KN. Arg-92 provides a ligand contact to UDP-N-acetyl-alpha-D-glucosamine. The Proton donor role is filled by Cys-116. 2-(S-cysteinyl)pyruvic acid O-phosphothioketal is present on Cys-116. UDP-N-acetyl-alpha-D-glucosamine is bound by residues 121-125, Asp-304, and Ile-326; that span reads RPVDQ.

It belongs to the EPSP synthase family. MurA subfamily.

The protein resides in the cytoplasm. It carries out the reaction phosphoenolpyruvate + UDP-N-acetyl-alpha-D-glucosamine = UDP-N-acetyl-3-O-(1-carboxyvinyl)-alpha-D-glucosamine + phosphate. The protein operates within cell wall biogenesis; peptidoglycan biosynthesis. In terms of biological role, cell wall formation. Adds enolpyruvyl to UDP-N-acetylglucosamine. This is UDP-N-acetylglucosamine 1-carboxyvinyltransferase from Paraburkholderia phymatum (strain DSM 17167 / CIP 108236 / LMG 21445 / STM815) (Burkholderia phymatum).